We begin with the raw amino-acid sequence, 815 residues long: Neuronal PAS domain-containing protein 2 (815 aa).

Positions 1 to 10 (MDEDEKDRAK) are enriched in basic and acidic residues. The interval 1 to 21 (MDEDEKDRAKRASRNKSEKKR) is disordered. The segment at 1-61 (MDEDEKDRAK…VIGFLQKHNE (61 aa)) is sufficient for heterodimer formation with BMAL1, E-box binding and for the effect of NADPH. A bHLH domain is found at 9-59 (AKRASRNKSEKKRRDQFNVLIKELSSMLPGNTRKMDKTTVLEKVIGFLQKH). Positions 82–152 (NEEFTQLMLE…KMLSSCMLMT (71 aa)) constitute a PAS 1 domain. 2 residues coordinate heme b: His119 and His171. Positions 237–307 (FLKEMCIVEE…RCHEHLMQFG (71 aa)) constitute a PAS 2 domain. The PAC domain occupies 311-354 (SCCYRFLTKGQQWIWLQTHYYITYHQWNSKPEFIVCTHMVVSYA). A compositionally biased stretch (low complexity) spans 405-420 (RTPSVSSRSSPKSSHT). 3 disordered regions span residues 405–467 (RTPS…SLPS), 584–656 (PGQI…AAGC), and 728–815 (FATT…QPLR). Polar residues-rich tracts occupy residues 425-462 (PAST…TALQ), 588-608 (ASPQ…SSQG), and 616-630 (ELTT…STAT). 2 stretches are compositionally biased toward low complexity: residues 633 to 655 (GPST…SAAG) and 732 to 752 (PPSQ…HQQQ). Residues 753–786 (RYLQVQTPSSLHNEQTDSLLLSSYSPQQGNMGYH) are compositionally biased toward polar residues. A compositionally biased stretch (low complexity) spans 787-815 (QTQQQQQQQQLPRRSNSLSESSNLPQPLR).

Component of the circadian clock oscillator which includes the CRY proteins, CLOCK or NPAS2, BMAL1 or BMAL2, CSNK1D and/or CSNK1E, TIMELESS and the PER proteins. Efficient DNA binding requires dimerization with another bHLH protein. Forms a heterodimer with BMAL1 and this heterodimerization is required for E-box-dependent transactivation. Heme serves as cofactor. In terms of tissue distribution, expressed in the retinal photoreceptor cells (at protein level). Expressed in the pineal gland and retina.

The protein resides in the nucleus. With respect to regulation, carbon monoxide (CO) and the redox state of the cell can modulate the transcriptional activity of the NPAS2-BMAL1 heterodimer. NADH and NADPH enhance the DNA-binding activity of the heterodimer whereas CO binds the heme group in NPAS2 and inhibits the DNA-binding activity of the heterodimer. Functionally, transcriptional activator which forms a core component of the circadian clock. The circadian clock, an internal time-keeping system, regulates various physiological processes through the generation of approximately 24 hour circadian rhythms in gene expression, which are translated into rhythms in metabolism and behavior. It is derived from the Latin roots 'circa' (about) and 'diem' (day) and acts as an important regulator of a wide array of physiological functions including metabolism, sleep, body temperature, blood pressure, endocrine, immune, cardiovascular, and renal function. Consists of two major components: the central clock, residing in the suprachiasmatic nucleus (SCN) of the brain, and the peripheral clocks that are present in nearly every tissue and organ system. Both the central and peripheral clocks can be reset by environmental cues, also known as Zeitgebers (German for 'timegivers'). The predominant Zeitgeber for the central clock is light, which is sensed by retina and signals directly to the SCN. The central clock entrains the peripheral clocks through neuronal and hormonal signals, body temperature and feeding-related cues, aligning all clocks with the external light/dark cycle. Circadian rhythms allow an organism to achieve temporal homeostasis with its environment at the molecular level by regulating gene expression to create a peak of protein expression once every 24 hours to control when a particular physiological process is most active with respect to the solar day. Transcription and translation of core clock components (CLOCK, NPAS2, BMAL1, BMAL2, PER1, PER2, PER3, CRY1 and CRY2) plays a critical role in rhythm generation, whereas delays imposed by post-translational modifications (PTMs) are important for determining the period (tau) of the rhythms (tau refers to the period of a rhythm and is the length, in time, of one complete cycle). A diurnal rhythm is synchronized with the day/night cycle, while the ultradian and infradian rhythms have a period shorter and longer than 24 hours, respectively. Disruptions in the circadian rhythms contribute to the pathology of cardiovascular diseases, cancer, metabolic syndromes and aging. A transcription/translation feedback loop (TTFL) forms the core of the molecular circadian clock mechanism. Transcription factors, CLOCK or NPAS2 and BMAL1 or BMAL2, form the positive limb of the feedback loop, act in the form of a heterodimer and activate the transcription of core clock genes and clock-controlled genes (involved in key metabolic processes), harboring E-box elements (5'-CACGTG-3') within their promoters. The core clock genes: PER1/2/3 and CRY1/2 which are transcriptional repressors form the negative limb of the feedback loop and interact with the CLOCK|NPAS2-BMAL1|BMAL2 heterodimer inhibiting its activity and thereby negatively regulating their own expression. This heterodimer also activates nuclear receptors NR1D1/2 and RORA/B/G, which form a second feedback loop and which activate and repress BMAL1 transcription, respectively. NPAS2 positively regulates the circadian expression of AANAT in the retinal photoreceptor cells. The protein is Neuronal PAS domain-containing protein 2 (NPAS2) of Gallus gallus (Chicken).